Here is a 221-residue protein sequence, read N- to C-terminus: Probable serine protease inhibitor 6 (221 aa).

An N-terminal signal peptide occupies residues 1-22 (MKCLFLLCLCLFPIVVFSSTFT). Positions 23-28 (SQNPIN) are excised as a propeptide. A Vacuolar targeting signal motif is present at residues 25–30 (NPINLP). Disulfide bonds link cysteine 76-cysteine 125 and cysteine 174-cysteine 191.

It belongs to the protease inhibitor I3 (leguminous Kunitz-type inhibitor) family.

Its subcellular location is the vacuole. Functionally, inhibitor of trypsin (serine protease). May protect the plant by inhibiting proteases of invading organisms. This is Probable serine protease inhibitor 6 from Solanum tuberosum (Potato).